Here is a 91-residue protein sequence, read N- to C-terminus: uncharacterized protein (91 aa).

The helical transmembrane segment at 50 to 70 threads the bilayer; the sequence is FGFFGGPFIGGLAGGLIGSAL.

It localises to the cell membrane. This is an uncharacterized protein from Bacillus subtilis (strain 168).